The following is a 294-amino-acid chain: Ribosomal RNA small subunit methyltransferase H (294 aa).

S-adenosyl-L-methionine-binding positions include 36–38 (GGH), aspartate 55, phenylalanine 82, aspartate 97, and glutamine 104. The disordered stretch occupies residues 265 to 285 (KPTVATDDEQNRNPRSRSAKW).

It belongs to the methyltransferase superfamily. RsmH family.

The protein resides in the cytoplasm. It carries out the reaction cytidine(1402) in 16S rRNA + S-adenosyl-L-methionine = N(4)-methylcytidine(1402) in 16S rRNA + S-adenosyl-L-homocysteine + H(+). Its function is as follows. Specifically methylates the N4 position of cytidine in position 1402 (C1402) of 16S rRNA. The polypeptide is Ribosomal RNA small subunit methyltransferase H (Synechococcus sp. (strain CC9902)).